The chain runs to 427 residues: Homeotic protein caudal (427 aa).

The segment at 104 to 273 is disordered; sequence QLMQQHHHHH…QPQPGKTRTK (170 aa). Positions 116-129 are enriched in low complexity; sequence ASSSSASSGSSSSG. Gly residues predominate over residues 145 to 164; that stretch reads GVGGAGGGGGVGGATDGGPG. The segment covering 183 to 195 has biased composition (polar residues); that stretch reads ITVSGSEISSPGA. Positions 209-243 are enriched in low complexity; that stretch reads HLSAVANNNNNNNNNNNSPSTHNNNNNNNSVSNNN. Thr-245 is modified (phosphothreonine). Residues 252–257 carry the Antp-type hexapeptide motif; sequence YFDWMK. Positions 273-332 form a DNA-binding region, homeobox; that stretch reads KDKYRVVYTDFQRLELEKEYCTSRYITIRRKSELAQTLSLSERQVKIWFQNRRAKERKQN.

The protein belongs to the Caudal homeobox family. As to expression, maternally localized in an anteroposterior gradient in the syncytial blastoderm. Also expressed in the pole cells. Zygotically localized in the primordia of the terminal abdominal segment, the hindgut and in the posterior midgut rudiment. Expressed in the gut, the gonads and parts of the genital disks of third instar larvae (at protein level).

The protein resides in the nucleus. Functionally, caudal (cad) is one of a number of transcription factors controlling segmentation of the embryo. Further transcriptional regulation via a 5' flanking region containing DNA replication-related elements (DRE) and by dref also regulated by trh and tgo via the CNS midline element. Alongside Bicoid (bcd), caudal forms concentration gradients down the anterior-posterior (A-P) axis providing positional information and subsequent induction of the gap genes. Plays a role in gastrulation/germ band extension, hindgut morphogenesis, positive regulation of cell proliferation, genital disk development and pattern formation. Acts as a key regulator of the Hox gene network and activates transcription via the downstream core promoter element (DPE) relative to the TATA box. Plays a role in the establishment of the hindgut and in the invagination of the hindgut primordium during gastrulation. These effects on the gut are achieved by acting combinatorially at the posterior of the embryo to activate transcription of different targets including fog, fkh and wg. Caudal is involved in regulation of proliferation through transactivation of the E2F gene. Postembryonically its function is mostly restricted to the intestine where it regulates antimicrobial peptide (AMP) levels preserving the normal gut flora. This is Homeotic protein caudal (cad) from Drosophila melanogaster (Fruit fly).